The sequence spans 196 residues: Phosphoheptose isomerase (196 aa).

The 160-residue stretch at 34-193 folds into the SIS domain; sequence LIETFKIGNK…EQGLFGIFAG (160 aa). 49 to 51 is a substrate binding site; it reads NGG. Zn(2+) contacts are provided by His58 and Glu62. Residues Glu62, 91–92, 117–119, Ser122, and Gln169 each bind substrate; these read ND and STS. Zn(2+) is bound by residues Gln169 and His177.

Belongs to the SIS family. GmhA subfamily. In terms of assembly, homotetramer. It depends on Zn(2+) as a cofactor.

It is found in the cytoplasm. It catalyses the reaction 2 D-sedoheptulose 7-phosphate = D-glycero-alpha-D-manno-heptose 7-phosphate + D-glycero-beta-D-manno-heptose 7-phosphate. It participates in carbohydrate biosynthesis; D-glycero-D-manno-heptose 7-phosphate biosynthesis; D-glycero-alpha-D-manno-heptose 7-phosphate and D-glycero-beta-D-manno-heptose 7-phosphate from sedoheptulose 7-phosphate: step 1/1. Functionally, catalyzes the isomerization of sedoheptulose 7-phosphate in D-glycero-D-manno-heptose 7-phosphate. This chain is Phosphoheptose isomerase, found in Trichlorobacter lovleyi (strain ATCC BAA-1151 / DSM 17278 / SZ) (Geobacter lovleyi).